A 200-amino-acid polypeptide reads, in one-letter code: NADH-quinone oxidoreductase subunit B (200 aa).

Positions 78, 79, 144, and 174 each coordinate [4Fe-4S] cluster.

This sequence belongs to the complex I 20 kDa subunit family. As to quaternary structure, NDH-1 is composed of 14 different subunits. Subunits NuoB, C, D, E, F, and G constitute the peripheral sector of the complex. It depends on [4Fe-4S] cluster as a cofactor.

The protein resides in the cell membrane. The enzyme catalyses a quinone + NADH + 5 H(+)(in) = a quinol + NAD(+) + 4 H(+)(out). Its function is as follows. NDH-1 shuttles electrons from NADH, via FMN and iron-sulfur (Fe-S) centers, to quinones in the respiratory chain. The immediate electron acceptor for the enzyme in this species is believed to be ubiquinone. Couples the redox reaction to proton translocation (for every two electrons transferred, four hydrogen ions are translocated across the cytoplasmic membrane), and thus conserves the redox energy in a proton gradient. This Dehalococcoides mccartyi (strain CBDB1) protein is NADH-quinone oxidoreductase subunit B.